A 216-amino-acid polypeptide reads, in one-letter code: Maleylacetoacetate isomerase (216 aa).

At methionine 1 the chain carries N-acetylmethionine. The 84-residue stretch at 4–87 (GKPILYSYFR…YLEETRPIPR (84 aa)) folds into the GST N-terminal domain. Glutathione is bound by residues 14–19 (SSCSWR) and glutamine 45. Lysine 57 carries the post-translational modification N6-succinyllysine. Glutathione is bound by residues valine 59, 71 to 72 (QS), glutamine 111, and 115 to 117 (NLS). One can recognise a GST C-terminal domain in the interval 92 to 212 (DPQKRAIVRM…HPRRQPDTPA (121 aa)). Threonine 136 carries the phosphothreonine modification. A Phosphoserine modification is found at serine 137. Lysine 177 carries the N6-succinyllysine modification. Position 181 is a phosphoserine (serine 181).

Belongs to the GST superfamily. Zeta family. As to quaternary structure, homodimer. The cofactor is glutathione. Expressed in liver, kidney, seminal glands and breast.

It is found in the cytoplasm. The catalysed reaction is 4-maleylacetoacetate = 4-fumarylacetoacetate. It catalyses the reaction RX + glutathione = an S-substituted glutathione + a halide anion + H(+). It functions in the pathway amino-acid degradation; L-phenylalanine degradation; acetoacetate and fumarate from L-phenylalanine: step 5/6. Its function is as follows. Probable bifunctional enzyme showing minimal glutathione-conjugating activity with ethacrynic acid and 7-chloro-4-nitrobenz-2-oxa-1, 3-diazole and maleylacetoacetate isomerase activity. Also has low glutathione peroxidase activity with t-butyl and cumene hydroperoxides. Is able to catalyze the glutathione dependent oxygenation of dichloroacetic acid to glyoxylic acid. The polypeptide is Maleylacetoacetate isomerase (Gstz1) (Mus musculus (Mouse)).